We begin with the raw amino-acid sequence, 105 residues long: MLLSKITFFERFEHDILSGTKTITLRDEAESHVITGQILPVSTFETDRWFCDIQIIDVTPVKLTELTEVHAKQENMTLPQLCDVIAEIYPGLEQLFMIRFRILSQ.

Residues 7-93 (TFFERFEHDI…VIAEIYPGLE (87 aa)) enclose the ASCH domain. Lys21 serves as the catalytic Proton acceptor. Residue Thr24 is the Nucleophile of the active site. Glu74 functions as the Proton donor in the catalytic mechanism.

It belongs to the N(4)-acetylcytidine amidohydrolase family.

The enzyme catalyses N(4)-acetylcytidine + H2O = cytidine + acetate + H(+). It catalyses the reaction N(4)-acetyl-2'-deoxycytidine + H2O = 2'-deoxycytidine + acetate + H(+). It carries out the reaction N(4)-acetylcytosine + H2O = cytosine + acetate + H(+). Functionally, catalyzes the hydrolysis of N(4)-acetylcytidine (ac4C). The chain is N(4)-acetylcytidine amidohydrolase from Shewanella baltica (strain OS223).